The following is a 487-amino-acid chain: 3-octaprenyl-4-hydroxybenzoate carboxy-lyase (487 aa).

Residue Asn-172 participates in Mn(2+) binding. Prenylated FMN contacts are provided by residues 175 to 177 (IYR), 189 to 191 (RWL), and 194 to 195 (RG). Residue Glu-238 participates in Mn(2+) binding. Asp-287 acts as the Proton donor in catalysis.

Belongs to the UbiD family. As to quaternary structure, homohexamer. It depends on prenylated FMN as a cofactor. The cofactor is Mn(2+).

The protein resides in the cell membrane. It carries out the reaction a 4-hydroxy-3-(all-trans-polyprenyl)benzoate + H(+) = a 2-(all-trans-polyprenyl)phenol + CO2. The protein operates within cofactor biosynthesis; ubiquinone biosynthesis. Its function is as follows. Catalyzes the decarboxylation of 3-octaprenyl-4-hydroxy benzoate to 2-octaprenylphenol, an intermediate step in ubiquinone biosynthesis. This Dechloromonas aromatica (strain RCB) protein is 3-octaprenyl-4-hydroxybenzoate carboxy-lyase.